We begin with the raw amino-acid sequence, 1019 residues long: Photoactivated adenylate cyclase subunit alpha (1019 aa).

Residues 55–148 (LRRLMYLSAS…GRMYGEWHMK (94 aa)) enclose the BLUF 1 domain. The Guanylate cyclase 1 domain maps to 204 to 332 (VVTFIYLVEF…DCINTASRIT (129 aa)). The region spanning 467–559 (LITLTYISQA…RVYGSPLDMT (93 aa)) is the BLUF 2 domain. The Guanylate cyclase 2 domain maps to 615–744 (VMLATDICSF…EVSARVMEVE (130 aa)). The tract at residues 822 to 861 (GTNAPGRGAPAGGIPSSPKVRPPGRTNSVSSYTPDPNEAL) is disordered. A compositionally biased stretch (low complexity) spans 825–839 (APGRGAPAGGIPSSP). The segment covering 846–855 (RTNSVSSYTP) has biased composition (polar residues).

This sequence belongs to the adenylyl cyclase class-4/guanylyl cyclase family. Heterotetramer of two alpha and two beta subunits. It depends on FAD as a cofactor.

It localises to the cell projection. The protein localises to the cilium. Its subcellular location is the flagellum. It catalyses the reaction ATP = 3',5'-cyclic AMP + diphosphate. With respect to regulation, activity increased by up to 80-fold under blue light. Functionally, acts as a blue light photoreceptor for the step-up photophobic response. Mediates photoavoidance. The sequence is that of Photoactivated adenylate cyclase subunit alpha from Euglena gracilis.